The chain runs to 889 residues: MGGCFSVSLPCDQVVSQFSQLLCVRGSYIHNLSKNLASLQKAMRMLKARQYDVIRRLETEEFTGRQQRLSQVQVWLTSVLIIQNQFNDLLRSNEVELQRLCLCGFCSKDLKLSYRYGKRVIMMLKEVESLSSQGFFDVVSEATPFADVDEIPFQPTIVGQEIMLEKAWNRLMEDGSGILGLYGMGGVGKTTLLTKINNKFSKIDDRFDVVIWVVVSRSSTVRKIQRDIAEKVGLGGMEWSEKNDNQIAVDIHNVLRRRKFVLLLDDIWEKVNLKAVGVPYPSKDNGCKVAFTTRSRDVCGRMGVDDPMEVSCLQPEESWDLFQMKVGKNTLGSHPDIPGLARKVARKCRGLPLALNVIGEAMACKRTVHEWCHAIDVLTSSAIDFSGMEDEILHVLKYSYDNLNGELMKSCFLYCSLFPEDYLIDKEGLVDYWISEGFINEKEGRERNINQGYEIIGTLVRACLLLEEERNKSNVKMHDVVREMALWISSDLGKQKEKCIVRAGVGLREVPKVKDWNTVRKISLMNNEIEEIFDSHECAALTTLFLQKNDVVKISAEFFRCMPHLVVLDLSENQSLNELPEEISELASLRYFNLSYTCIHQLPVGLWTLKKLIHLNLEHMSSLGSILGISNLWNLRTLGLRDSRLLLDMSLVKELQLLEHLEVITLDISSSLVAEPLLCSQRLVECIKEVDFKYLKEESVRVLTLPTMGNLRKLGIKRCGMREIKIERTTSSSSRNKSPTTPCFSNLSRVFIAKCHGLKDLTWLLFAPNLTFLEVGFSKEVEDIISEEKAEEHSATIVPFRKLETLHLFELRGLKRIYAKALHFPCLKVIHVEKCEKLRKLPLDSKSGIAGEELVIYYGEREWIERVEWEDQATQLRFLPSSRWRWRET.

Gly-2 is lipidated: N-myristoyl glycine. Cys-4 carries the S-palmitoyl cysteine lipid modification. The stretch at 29-58 (IHNLSKNLASLQKAMRMLKARQYDVIRRLE) forms a coiled coil. Residues 140 to 444 (SEATPFADVD…SEGFINEKEG (305 aa)) form the NB-ARC domain. Position 183–190 (183–190 (GMGGVGKT)) interacts with ATP. LRR repeat units lie at residues 518-539 (TVRK…HECA), 540-561 (ALTT…FFRC), 564-586 (HLVV…ISEL), 588-610 (SLRY…WTLK), 611-633 (KLIH…SNLW), and 634-656 (NLRT…KELQ).

This sequence belongs to the disease resistance NB-LRR family. In terms of assembly, in uninfected plants, interacts with PBS1 through the coiled coil domain. Homodimer.

It is found in the cell membrane. Functionally, disease resistance (R) protein that specifically recognizes the avrPphB type III effector avirulence protein from Pseudomonas syringae. Also confers resistance against Hyaloperonospora parasitica (downy mildew). Resistance proteins guard the plant against pathogens that contain an appropriate avirulence protein via an indirect interaction with this avirulence protein. That triggers a defense system including the hypersensitive response, which restricts the pathogen growth. Requires PBS1 to trigger the defense reaction against avrPphB. In case of infection by Pseudomonas syringae, AvrPphB triggers RPS5-mediated defense mechanism via the cleavage of PBS1, suggesting that the cleavage of PBS1 could trigger an exchange of ADP for ATP, thereby activating RPS5. May function as a fine-tuned sensor of alterations in the structure of the effector target PBS1. The protein is Disease resistance protein RPS5 (RPS5) of Arabidopsis thaliana (Mouse-ear cress).